A 182-amino-acid polypeptide reads, in one-letter code: ATP-dependent protease subunit HslV (182 aa).

T12 is a catalytic residue. Na(+) contacts are provided by A167, C170, and T173.

It belongs to the peptidase T1B family. HslV subfamily. In terms of assembly, a double ring-shaped homohexamer of HslV is capped on each side by a ring-shaped HslU homohexamer. The assembly of the HslU/HslV complex is dependent on binding of ATP.

The protein localises to the cytoplasm. The enzyme catalyses ATP-dependent cleavage of peptide bonds with broad specificity.. With respect to regulation, allosterically activated by HslU binding. Its function is as follows. Protease subunit of a proteasome-like degradation complex believed to be a general protein degrading machinery. The chain is ATP-dependent protease subunit HslV from Chlorobium phaeobacteroides (strain BS1).